The following is a 205-amino-acid chain: Protein PAXX (205 aa).

In terms of domain architecture, PISA spans 39–81 (FNLYVTDAAELWSTCFSPDSLARLKARFGLSGAEDIHSRFRAA). Phosphothreonine is present on T147. Over residues 147-159 (TITSPKKNTQPAG) the composition is skewed to polar residues. A disordered region spans residues 147-205 (TITSPKKNTQPAGTQFLPELDHQRGSSGPGVRRRCPGESLINPGFKSKKPAAGVDFDET). At S150 the chain carries Phosphoserine. Residues 172–205 (SSGPGVRRRCPGESLINPGFKSKKPAAGVDFDET) form a mediates interaction with XRCC5/Ku80 and XRCC6/Ku70 and association with the non-homologous end joining core complex region. Positions 191 to 205 (FKSKKPAAGVDFDET) match the XLM motif.

The protein belongs to the XRCC4-XLF family. PAXX subfamily. Homodimer. Interacts with the DNA-bound XRCC5/Ku80 and XRCC6/Ku70 heterodimer (Ku complex); the interaction is direct. Associated component of the non-homologous end joining (NHEJ) complex, composed of the core proteins PRKDC, LIG4, XRCC4, XRCC6/Ku70, XRCC5/Ku86 and NHEJ1/XLF. Interacts with POLL (DNA polymerase lambda); promoting POLL recruitment to double-strand breaks (DSBs) and stimulation of the end-filling activity of POLL. In terms of processing, phosphorylation may inhibit interaction with the DNA-bound XRCC5/Ku80 and XRCC6/Ku70 heterodimer (Ku complex).

Its subcellular location is the nucleus. The protein resides in the chromosome. In terms of biological role, non-essential DNA repair protein involved in DNA non-homologous end joining (NHEJ); participates in double-strand break (DSB) repair and V(D)J recombination. May act as a scaffold required for accumulation of the Ku heterodimer, composed of XRCC5/Ku80 and XRCC6/Ku70, at double-strand break sites and promote the assembly and/or stability of the NHEJ machinery. Involved in NHEJ by promoting the ligation of blunt-ended DNA ends. Together with NHEJ1/XLF, collaborates with DNA polymerase lambda (POLL) to promote joining of non-cohesive DNA ends. Constitutes a non-essential component of classical NHEJ: has a complementary but distinct function with NHEJ1/XLF in DNA repair. The protein is Protein PAXX of Mus musculus (Mouse).